Reading from the N-terminus, the 295-residue chain is Craniofacial development protein 1 (295 aa).

Acidic residues-rich tracts occupy residues 1–18 (MEEF…DEDY) and 25–43 (YSED…DGEE). Disordered regions lie at residues 1 to 155 (MEEF…KPKE) and 188 to 219 (FLKQ…RTSG). A compositionally biased stretch (basic residues) spans 49–65 (KGKRRKAQSIPARKRKQ). Residues 70 to 93 (LDEEEDGEEDSGGSSREEDEEEQE) show a composition bias toward acidic residues. 4 positions are modified to phosphoserine: Ser-80, Ser-83, Ser-84, and Ser-112. Residues 120 to 130 (KSKAASSSQVK) show a composition bias toward low complexity. Composition is skewed to basic and acidic residues over residues 145–155 (VKADELEKPKE) and 188–197 (FLKQTEKEKP). Residue Lys-146 forms a Glycyl lysine isopeptide (Lys-Gly) (interchain with G-Cter in SUMO2) linkage. Residues 174–213 (VTKEVDATSKEAKSFLKQTEKEKPQALVTSAATPPPAGSG) are hydrophilic. Ser-212 carries the phosphoserine modification. The 82-residue stretch at 214–295 (IKRTSGMSSL…RDLRLSKMKP (82 aa)) folds into the BCNT-C domain. The residue at position 215 (Lys-215) is an N6-methyllysine. Residue Ser-246 is modified to Phosphoserine.

It localises to the chromosome. It is found in the centromere. Its subcellular location is the kinetochore. Functionally, may play a role during embryogenesis. In Rattus norvegicus (Rat), this protein is Craniofacial development protein 1 (Cfdp1).